A 104-amino-acid chain; its full sequence is Ycf49-like protein (104 aa).

3 consecutive transmembrane segments (helical) span residues 6–26 (IPTW…IALV), 41–61 (LAWG…WHFF), and 73–93 (LQAL…WWIY).

The protein belongs to the ycf49 family.

The protein resides in the cell membrane. This is Ycf49-like protein from Synechocystis sp. (strain ATCC 27184 / PCC 6803 / Kazusa).